The following is a 108-amino-acid chain: Kanamycin resistance protein (108 aa).

The 99-residue stretch at 1–99 (SRTLLLERGR…PAVYMVQTRQ (99 aa)) folds into the N-acetyltransferase domain.

This chain is Kanamycin resistance protein, found in Rhizobium radiobacter (Agrobacterium tumefaciens).